The chain runs to 1454 residues: Alpha-2-macroglobulin-like protein 1 (1454 aa).

A signal peptide spans 1 to 17; that stretch reads MWAQLLLGMLALSPAIA. A disulfide bridge links Cys-40 with Cys-78. Residue Asn-120 is glycosylated (N-linked (GlcNAc...) asparagine). 2 cysteine pairs are disulfide-bonded: Cys-241/Cys-291 and Cys-259/Cys-279. 2 N-linked (GlcNAc...) asparagine glycosylation sites follow: Asn-281 and Asn-409. Intrachain disulfides connect Cys-464/Cys-557, Cys-589/Cys-769, Cys-819/Cys-847, Cys-845/Cys-881, Cys-919/Cys-1307, Cys-1075/Cys-1123, and Cys-1338/Cys-1453. A bait region region spans residues 695–726; that stretch reads SHRSPEYSTAMGAGGGHPEAFESSTPLHQAED. N-linked (GlcNAc...) asparagine glycosylation is present at Asn-857. The segment at residues 970–973 is a cross-link (isoglutamyl cysteine thioester (Cys-Gln)); that stretch reads CGEQ. N-linked (GlcNAc...) asparagine glycosylation occurs at Asn-1020.

It belongs to the protease inhibitor I39 (alpha-2-macroglobulin) family. In terms of assembly, monomer. In terms of tissue distribution, in the epidermis, expressed predominantly in the granular layer at the apical edge of keratinocytes (at protein level). Also detected in placenta, testis and thymus but not in epithelia of kidney, lung, small intestine or colon.

It is found in the secreted. Its function is as follows. Is able to inhibit all four classes of proteinases by a unique 'trapping' mechanism. This protein has a peptide stretch, called the 'bait region' which contains specific cleavage sites for different proteinases. When a proteinase cleaves the bait region, a conformational change is induced in the protein which traps the proteinase. The entrapped enzyme remains active against low molecular weight substrates (activity against high molecular weight substrates is greatly reduced). Following cleavage in the bait region a thioester bond is hydrolyzed and mediates the covalent binding of the protein to the proteinase. Displays inhibitory activity against chymotrypsin, papain, thermolysin, subtilisin A and, to a lesser extent, elastase but not trypsin. May play an important role during desquamation by inhibiting extracellular proteases. The chain is Alpha-2-macroglobulin-like protein 1 from Homo sapiens (Human).